Consider the following 185-residue polypeptide: Ribosome-recycling factor (185 aa).

The protein belongs to the RRF family.

It is found in the cytoplasm. In terms of biological role, responsible for the release of ribosomes from messenger RNA at the termination of protein biosynthesis. May increase the efficiency of translation by recycling ribosomes from one round of translation to another. This is Ribosome-recycling factor from Shewanella piezotolerans (strain WP3 / JCM 13877).